The chain runs to 151 residues: Large ribosomal subunit protein eL19 (151 aa).

The interval 62-93 is disordered; sequence RLKERRKKRSLKSEGKKSGSRKGKKGARANSK. Basic residues predominate over residues 79–88; it reads SGSRKGKKGA.

This sequence belongs to the eukaryotic ribosomal protein eL19 family. Part of the 50S ribosomal subunit.

In terms of biological role, binds to the 23S rRNA. The sequence is that of Large ribosomal subunit protein eL19 from Saccharolobus solfataricus (strain ATCC 35092 / DSM 1617 / JCM 11322 / P2) (Sulfolobus solfataricus).